We begin with the raw amino-acid sequence, 58 residues long: Large ribosomal subunit protein eL24 (58 aa).

Residues Cys-6, Cys-9, Cys-32, and Cys-36 each coordinate Zn(2+). Residues 6-36 (CAFCGADILPGYGIMYVKTDGTTLRFCSRKC) form a C4-type zinc finger.

This sequence belongs to the eukaryotic ribosomal protein eL24 family. As to quaternary structure, part of the 50S ribosomal subunit. Forms a cluster with proteins L3 and L14. The cofactor is Zn(2+).

In terms of biological role, binds to the 23S rRNA. The protein is Large ribosomal subunit protein eL24 of Pyrobaculum islandicum (strain DSM 4184 / JCM 9189 / GEO3).